The chain runs to 1061 residues: Protein pid-5 (1061 aa).

Belongs to the peptidase M24B family. May interact with pid-2, app-1 and prmt-5.

Its subcellular location is the cytoplasm. It localises to the perinuclear region. The protein resides in the P-body. In terms of biological role, together with pid-4, it is involved in gene silencing mediated by a class of 21 nucleotide PIWI-interacting RNAs (piRNAs) that possess a uracil residue at the 5'-end (also called 21U-RNAs) and guide the Piwi protein prg-1 to its DNA targets for silencing. Together with pid-4, it is required for the biogenesis of secondary and tertiary 22G-siRNAs. Specifically, promotes the production of 22G-siRNAs from the 5' end of target mRNAs. Together with pid-4, plays a role in small RNA-directed transgenerational epigenetic inheritance (also called RNAe) over several generations and germline immortality. Together with pid-4, plays a role in the formation of liquid-like condensates in the cytoplasm called Z granules. The sequence is that of Protein pid-5 from Caenorhabditis elegans.